Here is a 291-residue protein sequence, read N- to C-terminus: Arabinogalactan O-methyltransferase 2 (291 aa).

Residues 18–38 (WFLAVALAGLIGGAMLITSFI) form a helical membrane-spanning segment.

Belongs to the methyltransferase superfamily.

The protein resides in the golgi apparatus membrane. Involved in the methylation of glucuronic acid of different plant cell wall component, but mainly on side chains of arabinogalactans. The protein is Arabinogalactan O-methyltransferase 2 of Arabidopsis thaliana (Mouse-ear cress).